Here is a 465-residue protein sequence, read N- to C-terminus: 3-isopropylmalate dehydratase large subunit (465 aa).

Cys347, Cys407, and Cys410 together coordinate [4Fe-4S] cluster.

The protein belongs to the aconitase/IPM isomerase family. LeuC type 1 subfamily. Heterodimer of LeuC and LeuD. [4Fe-4S] cluster serves as cofactor.

It catalyses the reaction (2R,3S)-3-isopropylmalate = (2S)-2-isopropylmalate. The protein operates within amino-acid biosynthesis; L-leucine biosynthesis; L-leucine from 3-methyl-2-oxobutanoate: step 2/4. Catalyzes the isomerization between 2-isopropylmalate and 3-isopropylmalate, via the formation of 2-isopropylmaleate. The protein is 3-isopropylmalate dehydratase large subunit of Tolumonas auensis (strain DSM 9187 / NBRC 110442 / TA 4).